Reading from the N-terminus, the 99-residue chain is Integration host factor subunit beta (99 aa).

This sequence belongs to the bacterial histone-like protein family. Heterodimer of an alpha and a beta chain.

This protein is one of the two subunits of integration host factor, a specific DNA-binding protein that functions in genetic recombination as well as in transcriptional and translational control. This chain is Integration host factor subunit beta, found in Laribacter hongkongensis (strain HLHK9).